The chain runs to 283 residues: Elongation factor Ts (283 aa).

The interval Thr80–Val83 is involved in Mg(2+) ion dislocation from EF-Tu.

The protein belongs to the EF-Ts family.

Its subcellular location is the cytoplasm. Functionally, associates with the EF-Tu.GDP complex and induces the exchange of GDP to GTP. It remains bound to the aminoacyl-tRNA.EF-Tu.GTP complex up to the GTP hydrolysis stage on the ribosome. This chain is Elongation factor Ts, found in Haemophilus influenzae (strain PittEE).